Reading from the N-terminus, the 582-residue chain is Colicin-E9 (582 aa).

Disordered stretches follow at residues 1-74 (MSGG…SGGG), 246-270 (SPGVTNNTDKDVRPAGFTQGGNTRD), 294-321 (PDQVKQRQDEENRRQQEWDATHPVEAAE), 422-489 (ADAA…IADK), and 510-542 (SKDPELSKNLNPSNKSSVSKGYSPFTPKNQQVG). Residues 20–35 (INGGPTGIGVSGGASD) show a composition bias toward gly residues. Positions 36–45 (GSGWSSENNP) are enriched in low complexity. Over residues 46–74 (WGGGSGSGIHWGGGSGRGNGGGNGNSGGG) the composition is skewed to gly residues. Basic and acidic residues-rich tracts occupy residues 297–321 (VKQRQDEENRRQQEWDATHPVEAAE), 430–453 (QERRKQKENKEKDAKDKLDKESKR), and 465–476 (PVGDKWLDDAGK). Over residues 516 to 529 (SKNLNPSNKSSVSK) the composition is skewed to low complexity. The Zn(2+) site is built by His550, His575, and His579.

The protein belongs to the colicin/pyosin nuclease family.

Its function is as follows. This plasmid-coded bactericidal protein is an endonuclease active on both single- and double-stranded DNA but with undefined specificity. Colicins are polypeptide toxins produced by and active against E.coli and closely related bacteria. The chain is Colicin-E9 (col) from Escherichia coli.